Consider the following 221-residue polypeptide: PKHD-type hydroxylase NATL1_16191 (221 aa).

One can recognise a Fe2OG dioxygenase domain in the interval 80–174 (LIHGVMFTQS…RHVCVGWIQS (95 aa)). The Fe cation site is built by histidine 98, aspartate 100, and histidine 155. 2-oxoglutarate is bound at residue arginine 165.

It depends on Fe(2+) as a cofactor. L-ascorbate serves as cofactor.

This chain is PKHD-type hydroxylase NATL1_16191, found in Prochlorococcus marinus (strain NATL1A).